The following is a 285-amino-acid chain: Gap junction Cx32.2 protein (285 aa).

The Cytoplasmic portion of the chain corresponds to 2 to 19 (GDLGFLSKLLDQVQSHST). The helical transmembrane segment at 20–40 (VIGKIWMTVLFLFRIMVLGAG) threads the bilayer. The Extracellular portion of the chain corresponds to 41–76 (AESVWGDEQSDFTCNTQQPGCENVCYDWTFPISHIR). Residues 77–99 (FWVLQIIFVSTPTLIYLGHAMHI) traverse the membrane as a helical segment. Topologically, residues 100-148 (IQQETKLRARLSSPGGSRLCKQPKYTNEQGKVKIKGNLLGSYLTQLVFK) are cytoplasmic. The chain crosses the membrane as a helical span at residues 149–171 (IIIEAAFIVGQYYLYGFIMVPMF). The Extracellular segment spans residues 172–194 (PCSKKPCPFTVECYMSRPTEKTI). Residues 195-217 (FIIFMLVVACVSLLLNVIEVFYL) traverse the membrane as a helical segment. The Cytoplasmic segment spans residues 218–285 (ICTRVRCGSR…AKEEKRLLSH (68 aa)). The segment at 264–285 (ETSQSIGGSLDGAKEEKRLLSH) is disordered. The span at 275-285 (GAKEEKRLLSH) shows a compositional bias: basic and acidic residues.

The protein belongs to the connexin family. Beta-type (group I) subfamily. A connexon is composed of a hexamer of connexins.

The protein localises to the cell membrane. It localises to the cell junction. Its subcellular location is the gap junction. Functionally, one gap junction consists of a cluster of closely packed pairs of transmembrane channels, the connexons, through which materials of low MW diffuse from one cell to a neighboring cell. May be involved in ovarian follicular maturation. This is Gap junction Cx32.2 protein from Micropogonias undulatus (Atlantic croaker).